We begin with the raw amino-acid sequence, 395 residues long: S-adenosylmethionine synthase (395 aa).

Position 15 (histidine 15) interacts with ATP. Aspartate 17 contacts Mg(2+). Position 43 (glutamate 43) interacts with K(+). Positions 56 and 99 each coordinate L-methionine. The tract at residues 99–109 (QSPEIAQGVDR) is flexible loop. ATP contacts are provided by residues 164 to 166 (DAK), 230 to 231 (RF), aspartate 239, 245 to 246 (RK), alanine 262, and lysine 266. Residue aspartate 239 participates in L-methionine binding. Lysine 270 is a binding site for L-methionine.

This sequence belongs to the AdoMet synthase family. Homotetramer; dimer of dimers. The cofactor is Mg(2+). K(+) serves as cofactor.

The protein resides in the cytoplasm. It carries out the reaction L-methionine + ATP + H2O = S-adenosyl-L-methionine + phosphate + diphosphate. The protein operates within amino-acid biosynthesis; S-adenosyl-L-methionine biosynthesis; S-adenosyl-L-methionine from L-methionine: step 1/1. In terms of biological role, catalyzes the formation of S-adenosylmethionine (AdoMet) from methionine and ATP. The overall synthetic reaction is composed of two sequential steps, AdoMet formation and the subsequent tripolyphosphate hydrolysis which occurs prior to release of AdoMet from the enzyme. The sequence is that of S-adenosylmethionine synthase from Colwellia psychrerythraea (strain 34H / ATCC BAA-681) (Vibrio psychroerythus).